Consider the following 591-residue polypeptide: Aspartate--tRNA(Asp/Asn) ligase (591 aa).

E175 contributes to the L-aspartate binding site. An aspartate region spans residues 199–202 (QQYK). L-aspartate contacts are provided by R221 and H450. Residue 221–223 (RDE) participates in ATP binding. E484 is a binding site for ATP. Residue R491 participates in L-aspartate binding. 536-539 (GVDR) contributes to the ATP binding site.

This sequence belongs to the class-II aminoacyl-tRNA synthetase family. Type 1 subfamily. As to quaternary structure, homodimer.

The protein localises to the cytoplasm. It carries out the reaction tRNA(Asx) + L-aspartate + ATP = L-aspartyl-tRNA(Asx) + AMP + diphosphate. Aspartyl-tRNA synthetase with relaxed tRNA specificity since it is able to aspartylate not only its cognate tRNA(Asp) but also tRNA(Asn). Reaction proceeds in two steps: L-aspartate is first activated by ATP to form Asp-AMP and then transferred to the acceptor end of tRNA(Asp/Asn). The protein is Aspartate--tRNA(Asp/Asn) ligase of Rhodopseudomonas palustris (strain TIE-1).